A 355-amino-acid chain; its full sequence is Protein RecA (355 aa).

72-79 (GPESSGKT) contacts ATP.

This sequence belongs to the RecA family.

It is found in the cytoplasm. Functionally, can catalyze the hydrolysis of ATP in the presence of single-stranded DNA, the ATP-dependent uptake of single-stranded DNA by duplex DNA, and the ATP-dependent hybridization of homologous single-stranded DNAs. It interacts with LexA causing its activation and leading to its autocatalytic cleavage. The polypeptide is Protein RecA (Wolbachia sp. subsp. Brugia malayi (strain TRS)).